Consider the following 321-residue polypeptide: Mas-related G-protein coupled receptor member D (321 aa).

Over 1 to 8 the chain is Extracellular; it reads MNSTLDSS. Residue Asn-2 is glycosylated (N-linked (GlcNAc...) asparagine). The helical transmembrane segment at 9-29 threads the bilayer; that stretch reads PAPGLTISPTMDLVTWIYFSV. Thr-30 is a topological domain (cytoplasmic). Residues 31–51 form a helical membrane-spanning segment; sequence FLAMATCVGGMAGNSLVIWLL. Topologically, residues 52-72 are extracellular; the sequence is SCNGMQRSPFCVYVLNLAVAD. A helical membrane pass occupies residues 73-93; the sequence is FLFLFCMASMLSLETGPLLIV. Over 94–146 the chain is Cytoplasmic; it reads NISAKIYEGMRRIKYFAYTAGLSLLTAISTQRCLSVLFPIWYKCHRPRHLSSV. A helical membrane pass occupies residues 147 to 167; that stretch reads VSGALWALAFLMNFLASFFCV. The Extracellular portion of the chain corresponds to 168–181; that stretch reads QFWHPNKHQCFKVD. Residues 182–202 form a helical membrane-spanning segment; the sequence is IVFNSLILGIFMPVMILTSTI. At 203-220 the chain is on the cytoplasmic side; sequence LFIRVRKNSLMQRRRPRR. The helical transmembrane segment at 221-241 threads the bilayer; the sequence is LYVVILTSILVFLTCSLPLGI. The Extracellular segment spans residues 242-260; sequence NWFLLYWVDVKRDVRLLYS. Residues 261–281 traverse the membrane as a helical segment; the sequence is CVSRFSSSLSSSANPVIYFLV. At 282–321 the chain is on the cytoplasmic side; that stretch reads GSQKSHRLQESLGAVLGRALRDEPEPEGRETPSTCTNDGV. The span at 302 to 311 shows a compositional bias: basic and acidic residues; the sequence is RDEPEPEGRE. A disordered region spans residues 302–321; the sequence is RDEPEPEGRETPSTCTNDGV. The span at 312 to 321 shows a compositional bias: polar residues; sequence TPSTCTNDGV.

This sequence belongs to the G-protein coupled receptor 1 family. Mas subfamily. Expressed in a subset of sensory neurons that includes nociceptors. Expressed in the subclass of non-peptidergic sensory neurons that are IB4(+) and VR1(-).

It is found in the cell membrane. Its function is as follows. May regulate nociceptor function and/or development, including the sensation or modulation of pain. Functions as a specific membrane receptor for beta-alanine. The receptor couples with G-protein G(q) and G(i). The chain is Mas-related G-protein coupled receptor member D (Mrgprd) from Mus musculus (Mouse).